The primary structure comprises 104 residues: Cell cycle protein GpsB (104 aa).

The stretch at 34 to 72 (LDVVIQDYEVFQKKIERLEQEIHQLRTEAKRAASERQTR) forms a coiled coil. Positions 60-71 (TEAKRAASERQT) are enriched in basic and acidic residues. The disordered stretch occupies residues 60-82 (TEAKRAASERQTRHQTSPSVGST). The segment covering 73–82 (HQTSPSVGST) has biased composition (polar residues).

The protein belongs to the GpsB family. As to quaternary structure, forms polymers through the coiled coil domains. Interacts with PBP1, MreC and EzrA.

Its subcellular location is the cytoplasm. In terms of biological role, divisome component that associates with the complex late in its assembly, after the Z-ring is formed, and is dependent on DivIC and PBP2B for its recruitment to the divisome. Together with EzrA, is a key component of the system that regulates PBP1 localization during cell cycle progression. Its main role could be the removal of PBP1 from the cell pole after pole maturation is completed. Also contributes to the recruitment of PBP1 to the division complex. Not essential for septum formation. The chain is Cell cycle protein GpsB from Halalkalibacterium halodurans (strain ATCC BAA-125 / DSM 18197 / FERM 7344 / JCM 9153 / C-125) (Bacillus halodurans).